The following is a 368-amino-acid chain: Cytochrome b-c1 complex subunit 2, mitochondrial (368 aa).

The N-terminal 16 residues, 1 to 16, are a transit peptide targeting the mitochondrion; that stretch reads MLSAARLQFAQGSVRR. Phosphoserine is present on residues serine 141 and serine 168.

The protein belongs to the peptidase M16 family. UQCRC2/QCR2 subfamily. As to quaternary structure, component of the ubiquinol-cytochrome c oxidoreductase (cytochrome b-c1 complex, complex III, CIII), a multisubunit enzyme composed of 10 subunits. The complex is composed of 3 respiratory subunits cytochrome b (COB), cytochrome c1 (CYT1) and Rieske protein (RIP1), 2 core protein subunits COR1 and QCR2, and 5 low-molecular weight protein subunits QCR6, QCR7, QCR8, QCR9 and QCR10. The complex exists as an obligatory dimer and forms supercomplexes (SCs) in the inner mitochondrial membrane with a monomer or a dimer of cytochrome c oxidase (complex IV, CIV), resulting in 2 different assemblies (supercomplexes III(2)IV and III(2)IV(2)).

Its subcellular location is the mitochondrion inner membrane. Component of the ubiquinol-cytochrome c oxidoreductase, a multisubunit transmembrane complex that is part of the mitochondrial electron transport chain which drives oxidative phosphorylation. The respiratory chain contains 3 multisubunit complexes succinate dehydrogenase (complex II, CII), ubiquinol-cytochrome c oxidoreductase (cytochrome b-c1 complex, complex III, CIII) and cytochrome c oxidase (complex IV, CIV), that cooperate to transfer electrons derived from NADH and succinate to molecular oxygen, creating an electrochemical gradient over the inner membrane that drives transmembrane transport and the ATP synthase. The cytochrome b-c1 complex catalyzes electron transfer from ubiquinol to cytochrome c, linking this redox reaction to translocation of protons across the mitochondrial inner membrane, with protons being carried across the membrane as hydrogens on the quinol. In the process called Q cycle, 2 protons are consumed from the matrix, 4 protons are released into the intermembrane space and 2 electrons are passed to cytochrome c. The chain is Cytochrome b-c1 complex subunit 2, mitochondrial (QCR2) from Saccharomyces cerevisiae (strain ATCC 204508 / S288c) (Baker's yeast).